Consider the following 144-residue polypeptide: Mediator of RNA polymerase II transcription subunit 21 (144 aa).

It belongs to the Mediator complex subunit 21 family. As to quaternary structure, component of the Mediator complex, which is composed of MED1, MED4, MED6, MED7, MED8, MED9, MED10, MED11, MED12, MED13, MED13L, MED14, MED15, MED16, MED17, MED18, MED19, MED20, MED21, MED22, MED23, MED24, MED25, MED26, MED27, MED29, MED30, MED31, CCNC, CDK8 and CDC2L6/CDK11. The MED12, MED13, CCNC and CDK8 subunits form a distinct module termed the CDK8 module. Mediator containing the CDK8 module is less active than Mediator lacking this module in supporting transcriptional activation. Individual preparations of the Mediator complex lacking one or more distinct subunits have been variously termed ARC, CRSP, DRIP, PC2, SMCC and TRAP. Interacts with PPARG. Interacts with THRA in a ligand-dependent fashion.

It localises to the nucleus. Functionally, component of the Mediator complex, a coactivator involved in the regulated transcription of nearly all RNA polymerase II-dependent genes. Mediator functions as a bridge to convey information from gene-specific regulatory proteins to the basal RNA polymerase II transcription machinery. Mediator is recruited to promoters by direct interactions with regulatory proteins and serves as a scaffold for the assembly of a functional preinitiation complex with RNA polymerase II and the general transcription factors. This chain is Mediator of RNA polymerase II transcription subunit 21 (MED21), found in Pongo abelii (Sumatran orangutan).